We begin with the raw amino-acid sequence, 349 residues long: tRNA N6-adenosine threonylcarbamoyltransferase (349 aa).

Fe cation contacts are provided by His-113 and His-117. Substrate-binding positions include 135–139 (LVSGG), Asp-169, Gly-182, Asp-186, and Asn-281. Asp-309 lines the Fe cation pocket.

It belongs to the KAE1 / TsaD family. Fe(2+) is required as a cofactor.

It is found in the cytoplasm. It catalyses the reaction L-threonylcarbamoyladenylate + adenosine(37) in tRNA = N(6)-L-threonylcarbamoyladenosine(37) in tRNA + AMP + H(+). In terms of biological role, required for the formation of a threonylcarbamoyl group on adenosine at position 37 (t(6)A37) in tRNAs that read codons beginning with adenine. Is involved in the transfer of the threonylcarbamoyl moiety of threonylcarbamoyl-AMP (TC-AMP) to the N6 group of A37, together with TsaE and TsaB. TsaD likely plays a direct catalytic role in this reaction. The sequence is that of tRNA N6-adenosine threonylcarbamoyltransferase from Corynebacterium aurimucosum (strain ATCC 700975 / DSM 44827 / CIP 107346 / CN-1) (Corynebacterium nigricans).